The primary structure comprises 79 residues: Putative transmembrane protein ORF17 (79 aa).

A run of 2 helical transmembrane segments spans residues 8–28 and 50–70; these read LMIY…IMYY and VFVM…TTTI.

The protein resides in the host membrane. This is Putative transmembrane protein ORF17 from Haloarcula hispanica (His1V).